The following is a 670-amino-acid chain: UvrABC system protein B (670 aa).

Residues 26–414 (EGLEDGLAHQ…GGDVIDQVVR (389 aa)) enclose the Helicase ATP-binding domain. 39 to 46 (GVTGSGKT) contributes to the ATP binding site. The Beta-hairpin motif lies at 92-115 (YYDYYQPEAYVPSSDTFIEKDASV). The 167-residue stretch at 431-597 (QVDDLLSEIR…GINKKISDIL (167 aa)) folds into the Helicase C-terminal domain. A UVR domain is found at 630–665 (ELKIRELESKMLTHAQNLEFEEAAALRDEVQVLRAQ).

Belongs to the UvrB family. Forms a heterotetramer with UvrA during the search for lesions. Interacts with UvrC in an incision complex.

The protein resides in the cytoplasm. Its function is as follows. The UvrABC repair system catalyzes the recognition and processing of DNA lesions. A damage recognition complex composed of 2 UvrA and 2 UvrB subunits scans DNA for abnormalities. Upon binding of the UvrA(2)B(2) complex to a putative damaged site, the DNA wraps around one UvrB monomer. DNA wrap is dependent on ATP binding by UvrB and probably causes local melting of the DNA helix, facilitating insertion of UvrB beta-hairpin between the DNA strands. Then UvrB probes one DNA strand for the presence of a lesion. If a lesion is found the UvrA subunits dissociate and the UvrB-DNA preincision complex is formed. This complex is subsequently bound by UvrC and the second UvrB is released. If no lesion is found, the DNA wraps around the other UvrB subunit that will check the other stand for damage. This Pectobacterium atrosepticum (strain SCRI 1043 / ATCC BAA-672) (Erwinia carotovora subsp. atroseptica) protein is UvrABC system protein B.